A 74-amino-acid polypeptide reads, in one-letter code: Large ribosomal subunit protein bL31 (74 aa).

The Zn(2+) site is built by cysteine 16, cysteine 18, cysteine 38, and cysteine 41.

It belongs to the bacterial ribosomal protein bL31 family. Type A subfamily. In terms of assembly, part of the 50S ribosomal subunit. Requires Zn(2+) as cofactor.

Its function is as follows. Binds the 23S rRNA. This chain is Large ribosomal subunit protein bL31, found in Salinispora arenicola (strain CNS-205).